The sequence spans 322 residues: NADH-cytochrome b5 reductase 2 (322 aa).

The chain crosses the membrane as a helical span at residues 31–48 (LAPIYAAVGITGVGVGLY). In terms of domain architecture, FAD-binding FR-type spans 72–176 (QGWFDLKLSE…KGPIVKYPWE (105 aa)). 179-214 (KHNHICLIAGGTGITPMYQLAREIFKNPEDQTKVTL) is an FAD binding site.

This sequence belongs to the flavoprotein pyridine nucleotide cytochrome reductase family. It depends on FAD as a cofactor.

It is found in the mitochondrion outer membrane. It catalyses the reaction 2 Fe(III)-[cytochrome b5] + NADH = 2 Fe(II)-[cytochrome b5] + NAD(+) + H(+). May mediate the reduction of outer membrane cytochrome b5. The sequence is that of NADH-cytochrome b5 reductase 2 (mcr1) from Aspergillus niger (strain ATCC MYA-4892 / CBS 513.88 / FGSC A1513).